The sequence spans 179 residues: Ribosome maturation factor RimM (179 aa).

The region spanning 100–176 (KEEFHLLELI…FVIINPPNGL (77 aa)) is the PRC barrel domain.

It belongs to the RimM family. As to quaternary structure, binds ribosomal protein uS19.

Its subcellular location is the cytoplasm. In terms of biological role, an accessory protein needed during the final step in the assembly of 30S ribosomal subunit, possibly for assembly of the head region. Essential for efficient processing of 16S rRNA. May be needed both before and after RbfA during the maturation of 16S rRNA. It has affinity for free ribosomal 30S subunits but not for 70S ribosomes. The protein is Ribosome maturation factor RimM of Prochlorococcus marinus (strain MIT 9301).